Consider the following 817-residue polypeptide: Protein kintoun (817 aa).

Disordered stretches follow at residues 233–259, 385–404, 410–445, and 473–503; these read AEST…PRCS, AGAR…RKSC, AGTA…TPEN, and VQTS…KPLC. The segment covering 386–401 has biased composition (basic and acidic residues); sequence GAREESADSSGADHGR. Phosphoserine occurs at positions 622 and 631. Positions 653 to 692 are disordered; the sequence is ECSDPDGLQGKEKGVKEECPLSEKENTEHSTTSTADSNSS. Residues 661-680 are compositionally biased toward basic and acidic residues; sequence QGKEKGVKEECPLSEKENTE. Residues 681–692 are compositionally biased toward polar residues; it reads HSTTSTADSNSS.

The protein belongs to the PIH1 family. Kintoun subfamily. As to quaternary structure, interacts with CFAP300. Interacts with DNAI2 and HSPA1A. Interacts with DNAAF4. Interacts with DNAAF6/PIH1D3.

The protein localises to the cytoplasm. Its subcellular location is the dynein axonemal particle. Its function is as follows. Required for cytoplasmic pre-assembly of axonemal dyneins, thereby playing a central role in motility in cilia and flagella. Involved in pre-assembly of dynein arm complexes in the cytoplasm before intraflagellar transport loads them for the ciliary compartment. The chain is Protein kintoun from Rattus norvegicus (Rat).